The chain runs to 162 residues: Sec-independent protein translocase protein TatB (162 aa).

A helical transmembrane segment spans residues 1 to 21 (MFDIGFSELILIFVVGLVVLG). The tract at residues 136–162 (LTAYYPPDDDLVSPSTTKLEQDKQNVN) is disordered.

Belongs to the TatB family. As to quaternary structure, the Tat system comprises two distinct complexes: a TatABC complex, containing multiple copies of TatA, TatB and TatC subunits, and a separate TatA complex, containing only TatA subunits. Substrates initially bind to the TatABC complex, which probably triggers association of the separate TatA complex to form the active translocon.

It is found in the cell inner membrane. Its function is as follows. Part of the twin-arginine translocation (Tat) system that transports large folded proteins containing a characteristic twin-arginine motif in their signal peptide across membranes. Together with TatC, TatB is part of a receptor directly interacting with Tat signal peptides. TatB may form an oligomeric binding site that transiently accommodates folded Tat precursor proteins before their translocation. The sequence is that of Sec-independent protein translocase protein TatB from Haemophilus ducreyi (strain 35000HP / ATCC 700724).